A 193-amino-acid polypeptide reads, in one-letter code: Segregation and condensation protein B (193 aa).

It belongs to the ScpB family. Homodimer. Homodimerization may be required to stabilize the binding of ScpA to the Smc head domains. Component of a cohesin-like complex composed of ScpA, ScpB and the Smc homodimer, in which ScpA and ScpB bind to the head domain of Smc. The presence of the three proteins is required for the association of the complex with DNA.

It is found in the cytoplasm. Participates in chromosomal partition during cell division. May act via the formation of a condensin-like complex containing Smc and ScpA that pull DNA away from mid-cell into both cell halves. This chain is Segregation and condensation protein B, found in Shouchella clausii (strain KSM-K16) (Alkalihalobacillus clausii).